A 235-amino-acid chain; its full sequence is Regulator of G-protein signaling 18 (235 aa).

The residue at position 49 (S49) is a Phosphoserine. One can recognise an RGS domain in the interval 86-202; it reads SFDKLLSHRD…LKSEIYLHLI (117 aa). S216 and S218 each carry phosphoserine.

It is found in the cytoplasm. In terms of biological role, inhibits signal transduction by increasing the GTPase activity of G protein alpha subunits thereby driving them into their inactive GDP-bound form. Binds to G(i) alpha-1, G(i) alpha-2, G(i) alpha-3 and G(q) alpha. The chain is Regulator of G-protein signaling 18 (Rgs18) from Rattus norvegicus (Rat).